We begin with the raw amino-acid sequence, 1254 residues long: MKVIFATIWLIAGAWSQSAEQLGCIWYGQSHMIGAHWVNKGDTNPARPLNSPTSEAIFAKRCPMLYKEYKGESGEDELSLCCDAAQIETMESGLSQADGVFSRCPTCTRNMALTVCAMTCAKNHTLFLTAYNDTNDAGVDYVKYIDYRLTDDTVSKIYNSCIGIQHTQTGRPAMDLGCGSYNAKTCNYRRWYEFMGDVSGDYVPFQINYKWSEDAEEGSNEIYLDLSPLKCGESYEDSYACACIDCEESCPLTDAPTGPDELWKIAGLYGVTFILALIIACALSFFIFWGAFGKTSAPSVCMPTLFGEFFYHGFRIWGTFCAKHPVIVLALCSWAIAGLSFGIRYMTITTDPVELWAGEESQTRIEKDYFDQHFGPFYRTNQMFVKAVNQTYFTHETSNGVLNFGPAFEYNFLKEVFELQDSIMKLGMADNEGLDKICYAPVLMAGETPTVDRCAIQSVYGYFQHDMDRFENSYVDSNNYTINYLNQLEDCLRVPMMEDCFGTFGGPIEPGIAVGGMPKVAVGEDPDYMLATGLVLTFLGRNYNDESKLEPNMKWEKLFVDFLRDYKSDRLDIAYMAERSIQDAIVELSEGEVSTVVISYVVMFVYVAIALGHIRSCRGFLRESRIMLAIGGIVIVLASVVCSLGFWGYLDVTTTMLAIEVIPFLVLAVGVDNIFIMVHTYQRLDHSKFKTTHEAIGEAIGQVGPSILQTAGSEMACFAIGCISDMPAVKTFAMYAAIAILLDFLLQITAFVALMAIDEKRYLDGRLDMLCCVKSGGKKINDEDGDGVDRPKEVGLLETLFKNFYSPFLLSKPVKVSVLLIFTVITCLSLMVTPSIEKGLDQEMSMPKNSHVVKYFRYMVDLLAMGAPVYWVLKPGLNYSEPLQQNLICGGVECNNNSLSVQLYTQAQYPEITSLARPASSWLDDYIDWLAISDCCKYNVTTGGFCSSNSKSEDCLPCERGFTENGLRPDAETFNKYIPYFLFDLPDAECAKAGRASYADAVIYTIDDVGMSTVQDSYFMQYSTTSTTSEEFYSQLREVRRISGEINAMFKENNVDAEIFAYCVFYIYYEQYLTIWGDAMFSLGMSLVAIFLVTLLITGLDITSTFIVLFMVICILINMLGMMWAWSINLNAISLVNLVVCVGIGVEFVAHIVRSFKRAEGTAQERARHSLNVTGSSVLSGITLTKFAGIVVLGFSNSQIFQVFYFRMYLGIVLIGAAHGLILLPVLLSLLGPPQKLARSSGAEPTASITITTN.

The N-terminal stretch at 1–16 (MKVIFATIWLIAGAWS) is a signal peptide. Residues 17–272 (QSAEQLGCIW…WKIAGLYGVT (256 aa)) lie on the Extracellular side of the membrane. Disulfide bonds link C24–C81, C62–C116, C82–C120, C104–C241, C107–C161, C178–C186, C231–C246, and C243–C250. N-linked (GlcNAc...) asparagine glycosylation is found at N123 and N132. Residues 273 to 293 (FILALIIACALSFFIFWGAFG) traverse the membrane as a helical segment. Topologically, residues 294–325 (KTSAPSVCMPTLFGEFFYHGFRIWGTFCAKHP) are cytoplasmic. The chain crosses the membrane as a helical span at residues 326-346 (VIVLALCSWAIAGLSFGIRYM). The Extracellular segment spans residues 347 to 593 (TITTDPVELW…AIVELSEGEV (247 aa)). Residue N389 is glycosylated (N-linked (GlcNAc...) asparagine). An intrachain disulfide couples C438 to C454. The N-linked (GlcNAc...) asparagine glycan is linked to N479. C491 and C500 are joined by a disulfide. The 166-residue stretch at 592–757 (EVSTVVISYV…ITAFVALMAI (166 aa)) folds into the SSD domain. Residues 594 to 614 (STVVISYVVMFVYVAIALGHI) form a helical membrane-spanning segment. The Cytoplasmic portion of the chain corresponds to 615-625 (RSCRGFLRESR). The helical transmembrane segment at 626 to 646 (IMLAIGGIVIVLASVVCSLGF) threads the bilayer. The Extracellular portion of the chain corresponds to 647 to 657 (WGYLDVTTTML). The chain crosses the membrane as a helical span at residues 658 to 678 (AIEVIPFLVLAVGVDNIFIMV). Residues 679–736 (HTYQRLDHSKFKTTHEAIGEAIGQVGPSILQTAGSEMACFAIGCISDMPAVKTFAMYA) are Cytoplasmic-facing. The chain crosses the membrane as a helical span at residues 737 to 757 (AIAILLDFLLQITAFVALMAI). Over 758–815 (DEKRYLDGRLDMLCCVKSGGKKINDEDGDGVDRPKEVGLLETLFKNFYSPFLLSKPVK) the chain is Extracellular. Residues 816-836 (VSVLLIFTVITCLSLMVTPSI) traverse the membrane as a helical segment. The Cytoplasmic portion of the chain corresponds to 837-857 (EKGLDQEMSMPKNSHVVKYFR). A helical membrane pass occupies residues 858–878 (YMVDLLAMGAPVYWVLKPGLN). Over 879–1079 (YSEPLQQNLI…EQYLTIWGDA (201 aa)) the chain is Extracellular. C889 and C894 form a disulfide bridge. 2 N-linked (GlcNAc...) asparagine glycosylation sites follow: N896 and N939. 3 disulfides stabilise this stretch: C935-C990, C936-C958, and C946-C955. The chain crosses the membrane as a helical span at residues 1080-1100 (MFSLGMSLVAIFLVTLLITGL). At 1101-1105 (DITST) the chain is on the cytoplasmic side. A helical transmembrane segment spans residues 1106-1126 (FIVLFMVICILINMLGMMWAW). The Extracellular portion of the chain corresponds to 1127–1132 (SINLNA). A helical transmembrane segment spans residues 1133–1153 (ISLVNLVVCVGIGVEFVAHIV). Residues 1154-1174 (RSFKRAEGTAQERARHSLNVT) lie on the Cytoplasmic side of the membrane. A helical membrane pass occupies residues 1175–1195 (GSSVLSGITLTKFAGIVVLGF). The Extracellular segment spans residues 1196-1207 (SNSQIFQVFYFR). A helical transmembrane segment spans residues 1208-1228 (MYLGIVLIGAAHGLILLPVLL). At 1229-1254 (SLLGPPQKLARSSGAEPTASITITTN) the chain is on the cytoplasmic side.

The protein belongs to the patched family. In terms of tissue distribution, expressed in the midgut.

Its subcellular location is the cell membrane. It carries out the reaction cholesterol(in) = cholesterol(out). Important for cholesterol absorption at the midgut epithelium. Acts only in the early steps of sterol absorption, prior to Npc1a-dependent intracellular sterol trafficking. This Drosophila melanogaster (Fruit fly) protein is NPC intracellular cholesterol transporter 1 homolog 1b.